The sequence spans 122 residues: MIQQESRLKVADNSGARELLCIKVLGGSGRKTANIGDVIVCSVKQATPGGVVKKGDVVKAVIVRSKSGVRRNDGSYIKFDENAAVIVRDDKSPRGTRIFGPVARELRDNQFMKIVSLAPEVL.

Belongs to the universal ribosomal protein uL14 family. In terms of assembly, part of the 50S ribosomal subunit. Forms a cluster with proteins L3 and L19. In the 70S ribosome, L14 and L19 interact and together make contacts with the 16S rRNA in bridges B5 and B8.

Its function is as follows. Binds to 23S rRNA. Forms part of two intersubunit bridges in the 70S ribosome. The chain is Large ribosomal subunit protein uL14 from Halalkalibacterium halodurans (strain ATCC BAA-125 / DSM 18197 / FERM 7344 / JCM 9153 / C-125) (Bacillus halodurans).